Consider the following 622-residue polypeptide: 4-hydroxyphenylalkanoate adenylyltransferase (622 aa).

This sequence belongs to the ATP-dependent AMP-binding enzyme family.

It catalyses the reaction 17-(4-hydroxyphenyl)heptadecanoate + holo-[(phenol)carboxyphthiodiolenone synthase] + ATP = 17-(4-hydroxyphenyl)heptadecanoyl-[(phenol)carboxyphthiodiolenone synthase] + AMP + diphosphate. It carries out the reaction 19-(4-hydroxyphenyl)nonadecanoate + holo-[(phenol)carboxyphthiodiolenone synthase] + ATP = 19-(4-hydroxyphenyl)nonadecanoyl-[(phenol)carboxyphthiodiolenone synthase] + AMP + diphosphate. Its pathway is lipid metabolism; fatty acid biosynthesis. Functionally, catalyzes the activation of long-chain fatty acids as acyl-adenylates (acyl-AMP), which are then transferred to the multifunctional polyketide synthase PpsA for further chain extension. Involved in the biosynthesis of phenolphthiocerol, which is an important intermediate in the biosynthesis of phenolic glycolipid (PGL), also called mycosid B. The protein is 4-hydroxyphenylalkanoate adenylyltransferase (fadD29) of Mycobacterium marinum (strain ATCC BAA-535 / M).